Here is a 240-residue protein sequence, read N- to C-terminus: Manganese transport system ATP-binding protein MntB (240 aa).

An ABC transporter domain is found at 1–233 (MNIQGLTIAY…KIQFAYGDAP (233 aa)). Residue 33–40 (GPNGAGKS) coordinates ATP.

This sequence belongs to the ABC transporter superfamily.

It localises to the cell membrane. Functionally, this protein is probably a component of a manganese permease, a binding protein-dependent, ATP-driven transport system. Probably responsible for energy coupling to the transport system. The protein is Manganese transport system ATP-binding protein MntB (mntB) of Listeria innocua serovar 6a (strain ATCC BAA-680 / CLIP 11262).